A 349-amino-acid polypeptide reads, in one-letter code: Cobalt-precorrin-5B C(1)-methyltransferase (349 aa).

This sequence belongs to the CbiD family.

It carries out the reaction Co-precorrin-5B + S-adenosyl-L-methionine = Co-precorrin-6A + S-adenosyl-L-homocysteine. It participates in cofactor biosynthesis; adenosylcobalamin biosynthesis; cob(II)yrinate a,c-diamide from sirohydrochlorin (anaerobic route): step 6/10. Its function is as follows. Catalyzes the methylation of C-1 in cobalt-precorrin-5B to form cobalt-precorrin-6A. This is Cobalt-precorrin-5B C(1)-methyltransferase from Saccharolobus islandicus (strain M.16.27) (Sulfolobus islandicus).